Reading from the N-terminus, the 281-residue chain is MGIRKYKATTNGRRNMNGYDFAEITKTTPEKSLLAPLKHTAGRNSYGHITVRHRGGGTKRQYRIIDFKRIKDDVPATVKAIEYDPNRTANIALLVYADGTKSYIIAPKGLKVGMTVQSGPDADIKVGNALPLKNIPVGTVIHNIELKPGKGGQLARSAGASAQLLGKEEKYVLVRLSSGEVRMVLATCRATIGTVGNDEHALIIKGKAGRTRYAGQRPHVRGSVMNPNDHPHGGGEGKQPVGLPSPLSPWGKKTVGKKTRSHKARSNKFIVRGRKRGPHTR.

Positions 210–281 are disordered; sequence RTRYAGQRPH…RGRKRGPHTR (72 aa). A compositionally biased stretch (basic residues) spans 254-281; that stretch reads TVGKKTRSHKARSNKFIVRGRKRGPHTR.

Belongs to the universal ribosomal protein uL2 family. In terms of assembly, part of the 50S ribosomal subunit. Forms a bridge to the 30S subunit in the 70S ribosome.

In terms of biological role, one of the primary rRNA binding proteins. Required for association of the 30S and 50S subunits to form the 70S ribosome, for tRNA binding and peptide bond formation. It has been suggested to have peptidyltransferase activity; this is somewhat controversial. Makes several contacts with the 16S rRNA in the 70S ribosome. The polypeptide is Large ribosomal subunit protein uL2 (Limosilactobacillus reuteri subsp. reuteri (strain JCM 1112) (Lactobacillus reuteri)).